The following is a 61-amino-acid chain: Copper metallothionein 1-1 (61 aa).

The propeptide occupies 1–8 (MFSELINF). Cu cation-binding residues include Cys15, Cys17, Cys19, Cys22, and Cys28. A Glycyl lysine isopeptide (Lys-Gly) (interchain with G-Cter in ubiquitin) cross-link involves residue Lys30. Positions 32, 34, 38, 44, and 46 each coordinate Cu cation. The tract at residues 37-61 (GCNSDDKCPCGNKSEETKKSCCSGK) is disordered. The segment covering 40-55 (SDDKCPCGNKSEETKK) has biased composition (basic and acidic residues).

This sequence belongs to the metallothionein superfamily. Type 12 family.

Its function is as follows. Protects the cell against copper toxicity by tightly chelating copper ions. May also act as a depository for copper designated for the effective transfer into the apo forms of copper proteins. This is Copper metallothionein 1-1 (CUP1-1) from Saccharomyces cerevisiae (strain ATCC 204508 / S288c) (Baker's yeast).